Reading from the N-terminus, the 193-residue chain is Ion-translocating oxidoreductase complex subunit A (193 aa).

The next 6 membrane-spanning stretches (helical) occupy residues 4–24 (LALI…KFLG), 38–58 (AMGM…CSYL), 65–85 (APLG…AVVV), 102–122 (VLGI…VALL), 134–154 (AVYG…FAAL), and 171–191 (SVAL…AGLV).

It belongs to the NqrDE/RnfAE family. In terms of assembly, the complex is composed of six subunits: RnfA, RnfB, RnfC, RnfD, RnfE and RnfG.

Its subcellular location is the cell inner membrane. In terms of biological role, part of a membrane-bound complex that couples electron transfer with translocation of ions across the membrane. The sequence is that of Ion-translocating oxidoreductase complex subunit A from Alkalilimnicola ehrlichii (strain ATCC BAA-1101 / DSM 17681 / MLHE-1).